The primary structure comprises 216 residues: MKYGIVGYSGRMGQEIQKVFSEKGHELVLKVDVNGVEELDSPDVVIDFSSPEALPKTVDLCKKYRAGLVLGTTALKEEHLQMLRELSKEVPVVQAYNFSIGINVLKRFLSELVKVLEDWDVEIVETHHRFKKDAPSGTAILLESALGKSVPIHSLRVGGVPGDHVVVFGNIGETIEIKHRAISRTVFAIGALKAAEFLVGKDPGMYSFEEVIFGGE.

NAD(+) is bound by residues 9 to 12 (SGRM), 71 to 73 (GTT), and 95 to 98 (AYNF). The active-site Proton donor/acceptor is the H127. (S)-2,3,4,5-tetrahydrodipicolinate is bound at residue H128. K131 serves as a coordination point for NAD(+). K131 (proton donor) is an active-site residue. A (S)-2,3,4,5-tetrahydrodipicolinate-binding site is contributed by 137 to 138 (GT).

Belongs to the DapB family. In terms of assembly, homotetramer.

The protein resides in the cytoplasm. The catalysed reaction is (S)-2,3,4,5-tetrahydrodipicolinate + NAD(+) + H2O = (2S,4S)-4-hydroxy-2,3,4,5-tetrahydrodipicolinate + NADH + H(+). It carries out the reaction (S)-2,3,4,5-tetrahydrodipicolinate + NADP(+) + H2O = (2S,4S)-4-hydroxy-2,3,4,5-tetrahydrodipicolinate + NADPH + H(+). Its pathway is amino-acid biosynthesis; L-lysine biosynthesis via DAP pathway; (S)-tetrahydrodipicolinate from L-aspartate: step 4/4. With respect to regulation, is inhibited by high concentrations of NADH. Functionally, catalyzes the conversion of 4-hydroxy-tetrahydrodipicolinate (HTPA) to tetrahydrodipicolinate. Uses NADPH as a reductant with much more efficiency than NADH. This is 4-hydroxy-tetrahydrodipicolinate reductase from Thermotoga maritima (strain ATCC 43589 / DSM 3109 / JCM 10099 / NBRC 100826 / MSB8).